We begin with the raw amino-acid sequence, 194 residues long: E3 ubiquitin-protein ligase RNF4 (194 aa).

Positions Met-1–Gly-12 are enriched in basic residues. The required for ubiquitination activity stretch occupies residues Met-1–Thr-20. Positions Met-1–Glu-36 are disordered. Residues Pro-6 to Leu-65 are mediates interaction with TRPS1. 4 short sequence motifs (SUMO interaction motif) span residues Ile-40 to Val-43, Ile-50 to Leu-53, Val-61 to Val-63, and Val-71 to Val-74. Ser-98 and Ser-99 each carry phosphoserine. Residues Cys-136, Cys-139, Cys-158, His-160, Cys-163, Cys-166, Cys-177, and Cys-180 each coordinate Zn(2+). An RING-type zinc finger spans residues Cys-136 to Arg-181.

In terms of assembly, homodimer (via RING-type zinc finger domain). Interacts with GSC2. Interacts with AR/the androgen receptor and TBP. Interacts with TCF20. Interacts with PATZ1. Interacts with TRPS1; negatively regulates TRPS1 transcriptional repressor activity. Interacts with PML (isoform PML-1, isoform PML-2, isoform PML-3, isoform PML-4, isoform PML-5 and isoform PML-6). Interacts with PRDM1/Blimp-1. Post-translationally, sumoylated; conjugated by one or two SUMO1 moieties. Autoubiquitinated. Widely expressed with highest levels in testis.

The protein resides in the cytoplasm. It is found in the nucleus. The protein localises to the nucleoplasm. It localises to the PML body. It carries out the reaction S-ubiquitinyl-[E2 ubiquitin-conjugating enzyme]-L-cysteine + [acceptor protein]-L-lysine = [E2 ubiquitin-conjugating enzyme]-L-cysteine + N(6)-ubiquitinyl-[acceptor protein]-L-lysine.. It participates in protein modification; protein ubiquitination. E3 ubiquitin-protein ligase which binds polysumoylated chains covalently attached to proteins and mediates 'Lys-6'-, 'Lys-11'-, 'Lys-48'- and 'Lys-63'-linked polyubiquitination of those substrates and their subsequent targeting to the proteasome for degradation. Regulates the degradation of several proteins including PML and the transcriptional activator PEA3. Involved in chromosome alignment and spindle assembly, it regulates the kinetochore CENPH-CENPI-CENPK complex by targeting polysumoylated CENPI to proteasomal degradation. Regulates the cellular responses to hypoxia and heat shock through degradation of respectively EPAS1 and PARP1. Alternatively, it may also bind DNA/nucleosomes and have a more direct role in the regulation of transcription for instance enhancing basal transcription and steroid receptor-mediated transcriptional activation. Catalyzes ubiquitination of sumoylated PARP1 in response to PARP1 trapping to chromatin, leading to PARP1 removal from chromatin by VCP/p97. The polypeptide is E3 ubiquitin-protein ligase RNF4 (Rattus norvegicus (Rat)).